The sequence spans 383 residues: uncharacterized protein (383 aa).

Positions 1–23 (MKLTSIPIASTLLSLLAASGTLA) are cleaved as a signal peptide.

The protein belongs to the but2 family.

It localises to the cytoplasm. Its subcellular location is the nucleus. This is an uncharacterized protein from Schizosaccharomyces pombe (strain 972 / ATCC 24843) (Fission yeast).